We begin with the raw amino-acid sequence, 408 residues long: MSPCENDPPINWKRNLIVAWLGCFLTGAAFSLVMPFLPLYVEQLGVTGHSALNMWSGIVFSITFLFSAIASPFWGGLADRKGRKLMLLRSALGMGIVMVLMGLAQNIWQFLILRALLGLLGGFVPNANALIATQVPRNKSGWALGTLSTGGVSGALLGPMAGGLLADSYGLRPVFFITASVLILCFFVTLFCIREKFQPVSKKEMLHMREVVTSLKNPKLVLSLFVTTLIIQVATGSIAPILTLYVRELAGNVSNVAFISGMIASVPGVAALLSAPRLGKLGDRIGPEKILITALIFSVLLLIPMSYVQTPLQLGILRFLLGAADGALLPAVQTLLVYNSSNQIAGRIFSYNQSFRDIGNVTGPLMGAAISANYGFRAVFLVTAGVVLFNAVYSWNSLRRRRIPQISN.

A run of 11 helical transmembrane segments spans residues 16 to 36 (LIVAWLGCFLTGAAFSLVMPF), 58 to 78 (IVFSITFLFSAIASPFWGGLA), 92 to 112 (LGMGIVMVLMGLAQNIWQFLI), 115 to 135 (ALLGLLGGFVPNANALIATQV), 146 to 166 (TLSTGGVSGALLGPMAGGLLA), 173 to 193 (PVFFITASVLILCFFVTLFCI), 224 to 244 (LFVTTLIIQVATGSIAPILTL), 256 to 276 (VAFISGMIASVPGVAALLSAP), 290 to 310 (ILITALIFSVLLLIPMSYVQT), 319 to 339 (FLLGAADGALLPAVQTLLVYN), and 378 to 398 (AVFLVTAGVVLFNAVYSWNSL).

Belongs to the major facilitator superfamily. DHA1 family. MdtG (TC 2.A.1.2.20) subfamily.

It is found in the cell inner membrane. Its function is as follows. Confers resistance to fosfomycin and deoxycholate. This is Multidrug resistance protein MdtG from Escherichia coli O81 (strain ED1a).